The chain runs to 562 residues: Protein wntless (562 aa).

Residues methionine 1–lysine 13 are Cytoplasmic-facing. The helical transmembrane segment at leucine 14–leucine 34 threads the bilayer. Residues tyrosine 35 to glutamine 239 are Lumenal-facing. Asparagine 58 is a glycosylation site (N-linked (GlcNAc...) asparagine). The chain crosses the membrane as a helical span at residues isoleucine 240–tryptophan 260. Residues arginine 261–proline 270 lie on the Cytoplasmic side of the membrane. Residues alanine 271–leucine 291 traverse the membrane as a helical segment. The Lumenal portion of the chain corresponds to glutamate 292–glutamine 311. The chain crosses the membrane as a helical span at residues glycine 312 to isoleucine 332. Topologically, residues glutamine 333–arginine 344 are cytoplasmic. Residues tyrosine 345–cysteine 365 form a helical membrane-spanning segment. Residues glutamate 366–threonine 390 lie on the Lumenal side of the membrane. A helical membrane pass occupies residues phenylalanine 391–tryptophan 411. The Cytoplasmic segment spans residues lysine 412–arginine 441. Residues phenylalanine 442–methionine 462 traverse the membrane as a helical segment. At glycine 463 to serine 482 the chain is on the lumenal side. Residues alanine 483–tyrosine 503 traverse the membrane as a helical segment. Over alanine 504–aspartate 562 the chain is Cytoplasmic. The disordered stretch occupies residues histidine 539–aspartate 562. Positions proline 541 to threonine 556 are enriched in polar residues.

It belongs to the wntless family. As to quaternary structure, interacts with wg; in the Golgi. Interacts with Vps35, a component of the retromer complex; wls stability is regulated by Vps35.

Its subcellular location is the presynaptic cell membrane. It localises to the postsynaptic cell membrane. It is found in the cell membrane. The protein localises to the endoplasmic reticulum membrane. The protein resides in the endosome membrane. Its subcellular location is the golgi apparatus membrane. A segment polarity gene required for wingless (wg)-dependent patterning processes, acting in both wg-sending cells and wg-target cells. In non-neuronal cells wls directs wg secretion. The wls traffic loop encompasses the Golgi, the cell surface, an endocytic compartment and a retrograde route leading back to the Golgi, and involves clathrin-mediated endocytosis and the retromer complex (a conserved protein complex consisting of Vps35 and Vps26). In neuronal cells (the larval motorneuron NMJ), the wg signal moves across the synapse via the release of wls-containing exosome-like vesicles. Postsynaptic wls is required for the trafficking of fz2 through the fz2-interacting protein Grip. In Drosophila ananassae (Fruit fly), this protein is Protein wntless.